We begin with the raw amino-acid sequence, 644 residues long: uncharacterized protein (644 aa).

The chain crosses the membrane as a helical span at residues 16–38 (LLSYLGVVGVGIAGLCIYRSVWG). The span at 586 to 603 (VRQLQKEAGEGEAEEHPR) shows a compositional bias: basic and acidic residues. The segment at 586–613 (VRQLQKEAGEGEAEEHPRARPAAGKAQR) is disordered.

It localises to the membrane. This is an uncharacterized protein from Treponema pallidum (strain Nichols).